The chain runs to 585 residues: Ras-specific guanine nucleotide-releasing factor RalGPS1 (585 aa).

A Ras-GEF domain is found at 50–289 (TPEEFASQIT…YKLSLRIEPG (240 aa)). 2 disordered regions span residues 289-342 (GSSS…KSHS) and 378-410 (RSPR…SEEM). Over residues 303–312 (AGPSAGSSSA) the composition is skewed to low complexity. A PXXP motif is present at residues 330–333 (PTPP). The span at 385–396 (THTSSTAITNGL) shows a compositional bias: polar residues. In terms of domain architecture, PH spans 459–571 (VPTMEGPLRR…WHKHLDDACK (113 aa)). The interval 461–585 (TMEGPLRRKT…QVPANLMSFE (125 aa)) is required for stimulation of nucleotide exchange by RALA.

In terms of assembly, interacts with the SH3 domains of GRB2, NCK1, PLCG1 and SRC.

The protein localises to the cytoplasm. The protein resides in the cell membrane. In terms of biological role, guanine nucleotide exchange factor for the small GTPase RALA. May be involved in cytoskeleton organization. This chain is Ras-specific guanine nucleotide-releasing factor RalGPS1 (Ralgps1), found in Mus musculus (Mouse).